Reading from the N-terminus, the 303-residue chain is tRNA-cytidine(32) 2-sulfurtransferase (303 aa).

A PP-loop motif motif is present at residues 49 to 54; it reads SGGKDS. [4Fe-4S] cluster contacts are provided by cysteine 124, cysteine 127, and cysteine 215.

The protein belongs to the TtcA family. In terms of assembly, homodimer. The cofactor is Mg(2+). Requires [4Fe-4S] cluster as cofactor.

It is found in the cytoplasm. It carries out the reaction cytidine(32) in tRNA + S-sulfanyl-L-cysteinyl-[cysteine desulfurase] + AH2 + ATP = 2-thiocytidine(32) in tRNA + L-cysteinyl-[cysteine desulfurase] + A + AMP + diphosphate + H(+). The protein operates within tRNA modification. Functionally, catalyzes the ATP-dependent 2-thiolation of cytidine in position 32 of tRNA, to form 2-thiocytidine (s(2)C32). The sulfur atoms are provided by the cysteine/cysteine desulfurase (IscS) system. In Anaeromyxobacter sp. (strain Fw109-5), this protein is tRNA-cytidine(32) 2-sulfurtransferase.